Consider the following 116-residue polypeptide: Ly-6/neurotoxin-like protein 1 (116 aa).

The signal sequence occupies residues 1–20 (MTPLLTLFLVALIGLPLAQA). The UPAR/Ly6 domain occupies 21 to 105 (LDCHVCAYNG…FAAPATLALA (85 aa)). 5 disulfide bridges follow: cysteine 23–cysteine 46, cysteine 26–cysteine 33, cysteine 39–cysteine 64, cysteine 68–cysteine 85, and cysteine 86–cysteine 91. The GPI-anchor amidated asparagine moiety is linked to residue asparagine 92. Positions 93–116 (GAGFAAPATLALAPILLATLWGLL) are cleaved as a propeptide — removed in mature form.

In terms of assembly, interacts with nAChRs containing alpha-4:beta-2 (CHRNA4:CHRNB2) and alpha-7 (CHRNA7) subunits. Interacts with CHRNA4 probably in the endoplasmic reticulum prior to nAChR pentameric assembly. Interacts with KCNA2/Potassium voltage-gated channel subfamily A member 2.

It localises to the cell membrane. The protein localises to the cell projection. It is found in the dendrite. The protein resides in the endoplasmic reticulum. In terms of biological role, acts in different tissues through interaction to nicotinic acetylcholine receptors (nAChRs). The proposed role as modulator of nAChR activity seems to be dependent on the nAChR subtype and stoichiometry, and to involve an effect on nAChR trafficking and its cell surface expression, and on single channel properties of the nAChR inserted in the plasma membrane. Modulates functional properties of nicotinic acetylcholine receptors (nAChRs) to prevent excessive excitation, and hence neurodegeneration. Enhances desensitization by increasing both the rate and extent of desensitization of alpha-4:beta-2-containing nAChRs and slowing recovery from desensitization. Promotes large amplitude ACh-evoked currents through alpha-4:beta-2 nAChRs. Is involved in regulation of the nAChR pentameric assembly in the endoplasmic reticulum. Shifts stoichiometry from high sensitivity alpha-4(2):beta-2(3) to low sensitivity alpha-4(3):beta-2(2) nAChR. In vitro modulates alpha-3:beta-4-containing nAChRs. Reduces cell surface expression of (alpha-3:beta-4)(2):beta-4 and (alpha-3:beta-4)(2):alpha-5 nAChRs suggesting an interaction with nAChR alpha-3(-):(+)beta-4 subunit interfaces and an allosteric mode. Corresponding single channel effects characterized by decreased unitary conductance, altered burst proportions and enhanced desensitization/inactivation seem to depend on nAChR alpha:alpha subunit interfaces and are greater in (alpha-3:beta-2)(2):alpha-3 when compared to (alpha-3:beta-2)(2):alpha-5 nAChRs. Prevents plasticity in the primary visual cortex late in life. The protein is Ly-6/neurotoxin-like protein 1 of Saimiri boliviensis boliviensis (Bolivian squirrel monkey).